A 185-amino-acid polypeptide reads, in one-letter code: Ribosome-recycling factor (185 aa).

The segment at 143–163 (RKDGEAGEDEVARAEKDLDKS) is disordered.

It belongs to the RRF family.

Its subcellular location is the cytoplasm. Its function is as follows. Responsible for the release of ribosomes from messenger RNA at the termination of protein biosynthesis. May increase the efficiency of translation by recycling ribosomes from one round of translation to another. This is Ribosome-recycling factor from Mycobacterium ulcerans (strain Agy99).